The following is a 239-amino-acid chain: LRRN4 C-terminal-like protein (239 aa).

Positions 1–19 are cleaved as a signal peptide; it reads MLGSLSLLWLAAMTTSLVS. At 20-194 the chain is on the extracellular side; that stretch reads QPQILTLEDY…KFIMPPKPVT (175 aa). The 98-residue stretch at 82–179 folds into the Fibronectin type-III domain; the sequence is QPEPPRLGEV…EGPENWTGPS (98 aa). N-linked (GlcNAc...) asparagine glycosylation is found at asparagine 132 and asparagine 174. A helical transmembrane segment spans residues 195-215; that stretch reads LVYAAVGVGTALALLSCAALV. At 216–239 the chain is on the cytoplasmic side; it reads WHFCLRERWGCPRRQGMAQASEAL.

It is found in the membrane. The chain is LRRN4 C-terminal-like protein (Lrrn4cl) from Mus musculus (Mouse).